A 248-amino-acid polypeptide reads, in one-letter code: tRNA (guanine-N(1)-)-methyltransferase (248 aa).

S-adenosyl-L-methionine-binding positions include glycine 113 and 133 to 138; that span reads IGDYVL.

The protein belongs to the RNA methyltransferase TrmD family. Homodimer.

The protein localises to the cytoplasm. The catalysed reaction is guanosine(37) in tRNA + S-adenosyl-L-methionine = N(1)-methylguanosine(37) in tRNA + S-adenosyl-L-homocysteine + H(+). Functionally, specifically methylates guanosine-37 in various tRNAs. The polypeptide is tRNA (guanine-N(1)-)-methyltransferase (Shewanella frigidimarina (strain NCIMB 400)).